The primary structure comprises 235 residues: uncharacterized protein (235 aa).

A disordered region spans residues 37-235; it reads QNAKLNDGDN…GGEDYPWPWN (199 aa). The span at 72–89 shows a compositional bias: acidic residues; that stretch reads GSDDYSDVEDGGAEEGDS. The span at 112–124 shows a compositional bias: low complexity; sequence TSSTSTASTSSGS. The span at 152–170 shows a compositional bias: basic and acidic residues; it reads RRPELDLSPKIENRSDSSS. The span at 185 to 202 shows a compositional bias: polar residues; sequence NKDNPSRGQGNENPSASD.

This sequence belongs to the herpesviridae BKRF4 family.

This is an uncharacterized protein from Alcelaphine herpesvirus 1 (strain C500) (AlHV-1).